We begin with the raw amino-acid sequence, 580 residues long: Glutamyl-tRNA(Gln) amidotransferase subunit B-2, chloroplastic/mitochondrial (580 aa).

Low complexity-rich tracts occupy residues 20 to 35 (RRDA…ATVS) and 42 to 59 (AVST…SAAV). The tract at residues 20 to 64 (RRDATAAASTSAATVSRGRRARAVSTTTTTSSSSSSSAAVDARDA) is disordered.

The protein belongs to the GatB/GatE family. GatB subfamily. In terms of assembly, subunit of the heterotrimeric GatCAB amidotransferase (AdT) complex, composed of A, B and C subunits.

The protein localises to the mitochondrion. Its subcellular location is the plastid. It localises to the chloroplast. The enzyme catalyses L-glutamyl-tRNA(Gln) + L-glutamine + ATP + H2O = L-glutaminyl-tRNA(Gln) + L-glutamate + ADP + phosphate + H(+). In terms of biological role, allows the formation of correctly charged Gln-tRNA(Gln) through the transamidation of misacylated Glu-tRNA(Gln) in chloroplasts and mitochondria. The reaction takes place in the presence of glutamine and ATP through an activated gamma-phospho-Glu-tRNA(Gln). The chain is Glutamyl-tRNA(Gln) amidotransferase subunit B-2, chloroplastic/mitochondrial from Micromonas pusilla (strain CCMP1545) (Picoplanktonic green alga).